Consider the following 374-residue polypeptide: Ribosomal RNA large subunit methyltransferase G (374 aa).

Belongs to the methyltransferase superfamily. RlmG family.

Its subcellular location is the cytoplasm. It carries out the reaction guanosine(1835) in 23S rRNA + S-adenosyl-L-methionine = N(2)-methylguanosine(1835) in 23S rRNA + S-adenosyl-L-homocysteine + H(+). Specifically methylates the guanine in position 1835 (m2G1835) of 23S rRNA. This is Ribosomal RNA large subunit methyltransferase G from Pseudomonas fluorescens (strain ATCC BAA-477 / NRRL B-23932 / Pf-5).